Consider the following 523-residue polypeptide: Bifunctional purine biosynthesis protein PurH (523 aa).

In terms of domain architecture, MGS-like spans 4–152 (DHIRRPIRRA…KNHPSVAVVT (149 aa)).

Belongs to the PurH family.

It catalyses the reaction (6R)-10-formyltetrahydrofolate + 5-amino-1-(5-phospho-beta-D-ribosyl)imidazole-4-carboxamide = 5-formamido-1-(5-phospho-D-ribosyl)imidazole-4-carboxamide + (6S)-5,6,7,8-tetrahydrofolate. The catalysed reaction is IMP + H2O = 5-formamido-1-(5-phospho-D-ribosyl)imidazole-4-carboxamide. Its pathway is purine metabolism; IMP biosynthesis via de novo pathway; 5-formamido-1-(5-phospho-D-ribosyl)imidazole-4-carboxamide from 5-amino-1-(5-phospho-D-ribosyl)imidazole-4-carboxamide (10-formyl THF route): step 1/1. It participates in purine metabolism; IMP biosynthesis via de novo pathway; IMP from 5-formamido-1-(5-phospho-D-ribosyl)imidazole-4-carboxamide: step 1/1. In Mycobacterium marinum (strain ATCC BAA-535 / M), this protein is Bifunctional purine biosynthesis protein PurH.